The primary structure comprises 200 residues: MLDVIELDFDYHDQPLLQQISFHLPAGGLLHLKGSNGAGKTTLLKLIAGLLNPEKGEILFERQSIKKDLCTYQKQLCFVGHRSGINPYLTIRENCLYDIHFSPGAVGITELCRLFSLEHLIDYPCGLLSSGQKRQVALLRLWMSKAKLWLLDEPLVALDELSLLTIITKIQEHRAKGGAVLLTSHQDLPLNKADYEEYHL.

The region spanning 2–200 is the ABC transporter domain; sequence LDVIELDFDY…NKADYEEYHL (199 aa). 34–41 is a binding site for ATP; sequence GSNGAGKT.

It belongs to the ABC transporter superfamily. CcmA exporter (TC 3.A.1.107) family. In terms of assembly, the complex is composed of two ATP-binding proteins (CcmA) and two transmembrane proteins (CcmB).

It is found in the cell inner membrane. It catalyses the reaction heme b(in) + ATP + H2O = heme b(out) + ADP + phosphate + H(+). In terms of biological role, part of the ABC transporter complex CcmAB involved in the biogenesis of c-type cytochromes; once thought to export heme, this seems not to be the case, but its exact role is uncertain. Responsible for energy coupling to the transport system. The chain is Cytochrome c biogenesis ATP-binding export protein CcmA from Legionella pneumophila (strain Lens).